Consider the following 176-residue polypeptide: HTH-type transcriptional regulator DctR (176 aa).

Residues 109–174 (VPEAAVSLSR…ELVRHQHIDY (66 aa)) enclose the HTH luxR-type domain. A DNA-binding region (H-T-H motif) is located at residues 133 to 152 (TEDILEKLKISLKTFYCHKH).

Its function is as follows. May act as a transcriptional regulator of dctA. The sequence is that of HTH-type transcriptional regulator DctR (dctR) from Escherichia coli (strain K12).